A 155-amino-acid chain; its full sequence is Transcriptional regulator MraZ (155 aa).

SpoVT-AbrB domains lie at 5–52 (TYEN…SQDR) and 81–124 (SMNL…EPAA).

Belongs to the MraZ family. In terms of assembly, forms oligomers.

It is found in the cytoplasm. The protein localises to the nucleoid. The protein is Transcriptional regulator MraZ of Pelagibacter ubique (strain HTCC1062).